We begin with the raw amino-acid sequence, 609 residues long: Chaperone protein DnaK (609 aa).

Position 172 is a phosphothreonine; by autocatalysis (Thr-172). Positions 578-609 are disordered; that stretch reads QAQAQQQAGAGGAAKKDENVVDAEFEEVKDDK. Acidic residues predominate over residues 597–609; that stretch reads VVDAEFEEVKDDK.

The protein belongs to the heat shock protein 70 family.

In terms of biological role, acts as a chaperone. This chain is Chaperone protein DnaK, found in Geobacillus sp. (strain WCH70).